A 225-amino-acid chain; its full sequence is Transcriptional regulatory protein AfsQ1 (225 aa).

One can recognise a Response regulatory domain in the interval 3–116 (SLLLIEDDDA…VLDARIRAVL (114 aa)). D52 is modified (4-aspartylphosphate). A DNA-binding region (ompR/PhoB-type) is located at residues 124–223 (TDSASFGSLV…VRGVGYRLDP (100 aa)).

Post-translationally, phosphorylated by AfsQ2.

It is found in the cytoplasm. The protein localises to the nucleoid. In terms of biological role, forms part of a two-component regulatory system AfsQ1/AfsQ2 involved in secondary metabolism. This Streptomyces coelicolor (strain ATCC BAA-471 / A3(2) / M145) protein is Transcriptional regulatory protein AfsQ1.